Here is a 165-residue protein sequence, read N- to C-terminus: Transcription factor TCP16 (165 aa).

Over residues 1–11 (MDSKNGINNSQ) the composition is skewed to polar residues. Disordered stretches follow at residues 1–21 (MDSK…KDRH) and 146–165 (GNAT…TTTV). The segment covering 12 to 21 (KARRTPKDRH) has biased composition (basic residues). The 55-residue stretch at 17 to 71 (PKDRHLKIGGRDRRIRIPPSVAPQLFRLTKELGFKTDGETVSWLLQNAEPAIFAA) folds into the TCP domain. The segment covering 148-165 (ATASDTTSAATTTATTTV) has biased composition (low complexity).

As to expression, mostly in anther in young buds.

Its subcellular location is the nucleus. Required during early processes in pollen development. This Arabidopsis thaliana (Mouse-ear cress) protein is Transcription factor TCP16 (TCP16).